Reading from the N-terminus, the 957-residue chain is Sorting nexin-13 (957 aa).

Positions 97–284 (ANIIDEPLQQ…YVIWMIRDSN (188 aa)) constitute a PXA domain. The RGS domain maps to 373–511 (PLDSILVDNV…SFRQNALYVR (139 aa)). A PX domain is found at 559-680 (VQLHAYISDT…DFLENKAYSK (122 aa)). Arginine 601, serine 603, lysine 628, and arginine 642 together coordinate a 1,2-diacyl-sn-glycero-3-phospho-(1D-myo-inositol-3-phosphate).

Belongs to the sorting nexin family.

The protein resides in the early endosome membrane. In terms of biological role, may be involved in several stages of intracellular trafficking. Acts as a GAP for Galphas. May play a role in endosome homeostasis. The protein is Sorting nexin-13 (Snx13) of Mus musculus (Mouse).